The chain runs to 56 residues: Lantibiotic subtilin (56 aa).

A propeptide spanning residues 1–24 (MSKFDDFDLDVVKVSKQDSKITPQ) is cleaved from the precursor. Trp25 carries the post-translational modification N2-succinyltryptophan; partial. Residues 27–31 (SESLC) constitute a cross-link (lanthionine (Ser-Cys)). Ser29 is subject to 2,3-didehydroalanine (Ser). Cross-links (beta-methyllanthionine (Thr-Cys)) lie at residues 32–35 (TPGC), 37–43 (TGALQTC), 47–50 (TLTC), and 49–52 (TCNC). The residue at position 42 (Thr42) is a (Z)-2,3-didehydrobutyrine. Ser55 is modified (2,3-didehydroalanine (Ser)).

The protein belongs to the type A lantibiotic family. In terms of processing, maturation of lantibiotics involves the enzymatic conversion of Thr, and Ser into dehydrated AA and the formation of thioether bonds with cysteine. This is followed by membrane translocation and cleavage of the modified precursor. Succinylated subtilin is 10-20 times less active than subtilin. The ratio subtilin/succinylated subtilin is about 1:2 after 24 hours growth. Post-translationally, the 2,3-didehydrobutyrine is determined to be the Z-isomer.

Its function is as follows. Lanthionine-containing peptide antibiotic (lantibiotic) active on Gram-positive bacteria. The bactericidal activity of lantibiotics is based on depolarization of energized bacterial cytoplasmic membranes, initiated by the formation of aqueous transmembrane pores. This chain is Lantibiotic subtilin (spaS), found in Bacillus subtilis.